Here is a 110-residue protein sequence, read N- to C-terminus: UPF0060 membrane protein PFL_4337 (110 aa).

A run of 4 helical transmembrane segments spans residues 5–25 (LWFF…WMWL), 31–51 (ALWV…LTKV), 59–79 (AYAA…AVVE), and 84–104 (LGSD…ILFG).

Belongs to the UPF0060 family.

It is found in the cell inner membrane. This chain is UPF0060 membrane protein PFL_4337, found in Pseudomonas fluorescens (strain ATCC BAA-477 / NRRL B-23932 / Pf-5).